A 393-amino-acid chain; its full sequence is Probable RNA methyltransferase sce3898 (393 aa).

The active-site Proton acceptor is Glu82. The 240-residue stretch at 90–329 folds into the Radical SAM core domain; sequence RPGRYSACVS…VRSARLDAFR (240 aa). Cys97 and Cys353 form a disulfide bridge. Cys104, Cys108, and Cys111 together coordinate [4Fe-4S] cluster. S-adenosyl-L-methionine is bound by residues 157-158, 212-214, and Asn294; these read GE and SLG. Residue Cys353 is the S-methylcysteine intermediate of the active site. Residues 357-393 form a disordered region; that stretch reads ARPSAEAQRPGGRRAPPRPGATAGAADVGPSAPPRPA. The segment covering 373 to 382 has biased composition (low complexity); sequence PRPGATAGAA.

Belongs to the radical SAM superfamily. RlmN family. [4Fe-4S] cluster serves as cofactor.

The protein resides in the cytoplasm. The protein is Probable RNA methyltransferase sce3898 of Sorangium cellulosum (strain So ce56) (Polyangium cellulosum (strain So ce56)).